A 1383-amino-acid chain; its full sequence is Cell surface hyaluronidase (1383 aa).

The interval 1–76 (MYAAGSRGHS…QRTPSESRKR (76 aa)) is disordered. Residues 1 to 82 (MYAAGSRGHS…SRKRKRHKNT (82 aa)) lie on the Cytoplasmic side of the membrane. Ser-10, Ser-53, and Ser-63 each carry phosphoserine. The helical; Signal-anchor for type II membrane protein transmembrane segment at 83-103 (FICFAITSFSFFVALAVILGI) threads the bilayer. Residues 104–1383 (SSKYAPDENC…DLLQQALKVL (1280 aa)) are Extracellular-facing. Residues 121 to 245 (RNWDPGQDSA…QRTSWTMLAR (125 aa)) form the G8 domain. A GG-type lectin 1 domain is found at 255 to 412 (GSYAFEKDFS…ISLSGFRVDI (158 aa)). Asn-292 carries an N-linked (GlcNAc...) asparagine glycan. 3 PbH1 repeats span residues 669-691 (HPNN…WYLF), 711-733 (TPLG…FVDK), and 791-812 (GGDI…TFAS). N-linked (GlcNAc...) asparagine glycosylation is found at Asn-914 and Asn-1234. The GG-type lectin 2 domain maps to 1208–1366 (KSYLPVRFQS…MEEYGCSRTG (159 aa)).

Belongs to the CEMIP family. Ca(2+) is required as a cofactor. Widely expressed. Strongly expressed in endothelial cells in the subcapsular sinus of lymph nodes and in the liver sinusoid, two primary sites implicated in systemic hyaluronan turnover.

The protein localises to the cell membrane. It catalyses the reaction Random hydrolysis of (1-&gt;4)-linkages between N-acetyl-beta-D-glucosamine and D-glucuronate residues in hyaluronate.. In terms of biological role, cell surface hyaluronidase that mediates the initial cleavage of extracellular high-molecular-weight hyaluronan into intermediate-size hyaluronan of approximately 5 kDa fragments. Very specific to hyaluronan; not able to cleave chondroitin sulfate or dermatan sulfate. Has an essential function in systemic hyaluronan catabolism and turnover and regulates cell adhesion and migration via hyaluronan degradation at focal adhesion sites. Acts as a regulator of angiogenesis and heart morphogenesis by mediating degradation of extracellular hyaluronan, thereby regulating VEGF signaling. The polypeptide is Cell surface hyaluronidase (Mus musculus (Mouse)).